Reading from the N-terminus, the 521-residue chain is Importin subunit alpha-3 (521 aa).

A2 carries the N-acetylalanine modification. One can recognise an IBB domain in the interval 2 to 58 (ADNEKLDNQRLKNFKNKGRDLETMRRQRNEVVVELRKNKRDEHLLKRRNVPHEDICE). The Nuclear localization signal signature appears at 43 to 52 (EHLLKRRNVP). S60 carries the post-translational modification Phosphoserine. The stretch at 66–106 (YRVQNTSLEAIVQNASSDNQGIQLSAVQAARKLLSSDRNPP) is one ARM 1; truncated repeat. 8 ARM repeats span residues 107 to 149 (IDDL…TSEQ), 150 to 194 (TQAV…CRDY), 195 to 233 (VISL…HKDP), 234 to 278 (PPPM…EQIQ), 279 to 318 (MVID…TDEQ), 319 to 360 (TQVV…NQQQ), 361 to 400 (VQAV…ISGR), and 401 to 443 (KDQV…KMAE). The interval 137–229 (WALTNIASGT…VTWVMVNLCR (93 aa)) is NLS binding site (major). The interval 306 to 394 (RAVGNIVTGT…QKEAAWAISN (89 aa)) is NLS binding site (minor). Residues 447-485 (ETIGNLIEECGGLEKIEQLQNHENEDIYKLAYEIIDQFF) form an ARM 10; atypical repeat.

Belongs to the importin alpha family. In terms of assembly, forms a complex with importin subunit beta-1 (KPNB1). Interacts with SNAI1. Interacts with TALDO1 isoform 1. Interacts with CYB1. As to quaternary structure, (Microbial infection) Interacts with MERS virus protein OF4b; this interaction prevents the translocation of NF-kappa-B complex to the nucleus. (Microbial infection) Interacts with human adenovirus 5 E1A protein; this interaction allows E1A import into the host nucleus. In terms of assembly, (Microbial infection) Interacts with Chikungunya virus capsid protein; this interaction allows the nuclear import of the viral capsid protein. As to expression, highly expressed in testis, ovary, small intestine, heart, skeletal muscle, lung and pancreas, but barely detectable in kidney, thymus, colon and peripheral blood leukocytes.

It is found in the cytoplasm. Its subcellular location is the nucleus. Functions in nuclear protein import as an adapter protein for nuclear receptor KPNB1. Binds specifically and directly to substrates containing either a simple or bipartite NLS motif. Docking of the importin/substrate complex to the nuclear pore complex (NPC) is mediated by KPNB1 through binding to nucleoporin FxFG repeats and the complex is subsequently translocated through the pore by an energy requiring, Ran-dependent mechanism. At the nucleoplasmic side of the NPC, Ran binds to importin-beta and the three components separate and importin-alpha and -beta are re-exported from the nucleus to the cytoplasm where GTP hydrolysis releases Ran from importin. The directionality of nuclear import is thought to be conferred by an asymmetric distribution of the GTP- and GDP-bound forms of Ran between the cytoplasm and nucleus. Mediates nuclear import of AARS1, MRTFA and RANBP3. Functionally, (Microbial infection) In vitro, mediates the nuclear import of human cytomegalovirus UL84 by recognizing a non-classical NLS. In vitro, mediates the nuclear import of human cytomegalovirus UL84 by recognizing a non-classical NLS. The protein is Importin subunit alpha-3 of Homo sapiens (Human).